We begin with the raw amino-acid sequence, 250 residues long: Eukaryotic translation initiation factor 2 subunit 2 (250 aa).

The segment at 193–217 (CHTCKSPETQLTKDTRLFFLQCTNC) adopts a C4-type zinc-finger fold.

The protein belongs to the eIF-2-beta/eIF-5 family. As to quaternary structure, eukaryotic translation initiation factor 2 eIF2 is a heterotrimeric complex composed of an alpha, a beta and a gamma subunit.

The protein resides in the cytoplasm. It is found in the cytosol. In terms of biological role, component of the eIF2 complex that functions in the early steps of protein synthesis by forming a ternary complex with GTP and initiator tRNA. This complex binds to a 40S ribosomal subunit, followed by mRNA binding to form a 43S pre-initiation complex (43S PIC). Junction of the 60S ribosomal subunit to form the 80S initiation complex is preceded by hydrolysis of the GTP bound to eIF2 and release of an eIF2-GDP binary complex. In order for eIF2 to recycle and catalyze another round of initiation, the GDP bound to eIF2 must exchange with GTP by way of a reaction catalyzed by eIF2B. The sequence is that of Eukaryotic translation initiation factor 2 subunit 2 from Caenorhabditis elegans.